The chain runs to 394 residues: Dual-specificity RNA methyltransferase RlmN (394 aa).

The active-site Proton acceptor is Glu116. The Radical SAM core domain maps to Glu122–Asp365. Cysteines 129 and 370 form a disulfide. 3 residues coordinate [4Fe-4S] cluster: Cys136, Cys140, and Cys143. S-adenosyl-L-methionine is bound by residues Gly196 to Glu197, Ser228, Ser250 to His252, and Asn327. Catalysis depends on Cys370, which acts as the S-methylcysteine intermediate.

It belongs to the radical SAM superfamily. RlmN family. The cofactor is [4Fe-4S] cluster.

The protein localises to the cytoplasm. It catalyses the reaction adenosine(2503) in 23S rRNA + 2 reduced [2Fe-2S]-[ferredoxin] + 2 S-adenosyl-L-methionine = 2-methyladenosine(2503) in 23S rRNA + 5'-deoxyadenosine + L-methionine + 2 oxidized [2Fe-2S]-[ferredoxin] + S-adenosyl-L-homocysteine. The catalysed reaction is adenosine(37) in tRNA + 2 reduced [2Fe-2S]-[ferredoxin] + 2 S-adenosyl-L-methionine = 2-methyladenosine(37) in tRNA + 5'-deoxyadenosine + L-methionine + 2 oxidized [2Fe-2S]-[ferredoxin] + S-adenosyl-L-homocysteine. Functionally, specifically methylates position 2 of adenine 2503 in 23S rRNA and position 2 of adenine 37 in tRNAs. m2A2503 modification seems to play a crucial role in the proofreading step occurring at the peptidyl transferase center and thus would serve to optimize ribosomal fidelity. The sequence is that of Dual-specificity RNA methyltransferase RlmN from Dinoroseobacter shibae (strain DSM 16493 / NCIMB 14021 / DFL 12).